Consider the following 1342-residue polypeptide: DNA-directed RNA polymerase subunit beta (1342 aa).

The protein belongs to the RNA polymerase beta chain family. In terms of assembly, the RNAP catalytic core consists of 2 alpha, 1 beta, 1 beta' and 1 omega subunit. When a sigma factor is associated with the core the holoenzyme is formed, which can initiate transcription.

It catalyses the reaction RNA(n) + a ribonucleoside 5'-triphosphate = RNA(n+1) + diphosphate. Functionally, DNA-dependent RNA polymerase catalyzes the transcription of DNA into RNA using the four ribonucleoside triphosphates as substrates. The polypeptide is DNA-directed RNA polymerase subunit beta (Serratia proteamaculans (strain 568)).